Here is a 344-residue protein sequence, read N- to C-terminus: Protease HtpX homolog (344 aa).

Transmembrane regions (helical) follow at residues 8–28, 46–66, and 74–94; these read VALG…ATVA, ALTG…FVLV, and VSFL…TYVA. Residue histidine 172 coordinates Zn(2+). Residue glutamate 173 is part of the active site. Histidine 176 contributes to the Zn(2+) binding site. 2 helical membrane passes run 183–203 and 220–240; these read AIML…VTAV and LAVG…VLAF. Residue glutamate 245 participates in Zn(2+) binding.

Belongs to the peptidase M48B family. Zn(2+) is required as a cofactor.

The protein localises to the cell membrane. This Pyrobaculum calidifontis (strain DSM 21063 / JCM 11548 / VA1) protein is Protease HtpX homolog.